Reading from the N-terminus, the 134-residue chain is MSNTENKQKRVSVGKDIATRRRVARARRHFRIRKNLRGTPEAPRLVVHRSSRHMHVQIIDDVAGHTLAAASSIEAEVRATEGDKKAKGAKVGQLIAERAKAAGIEQVVFDRAGYKYHGRVAALADAAREGGLKF.

The protein belongs to the universal ribosomal protein uL18 family. In terms of assembly, part of the 50S ribosomal subunit; part of the 5S rRNA/L5/L18/L25 subcomplex. Contacts the 5S and 23S rRNAs.

In terms of biological role, this is one of the proteins that bind and probably mediate the attachment of the 5S RNA into the large ribosomal subunit, where it forms part of the central protuberance. The sequence is that of Large ribosomal subunit protein uL18 from Corynebacterium glutamicum (strain ATCC 13032 / DSM 20300 / JCM 1318 / BCRC 11384 / CCUG 27702 / LMG 3730 / NBRC 12168 / NCIMB 10025 / NRRL B-2784 / 534).